The chain runs to 906 residues: Protein translocase subunit SecA (906 aa).

ATP is bound by residues Q90, 108-112, and D503; that span reads GEGKT. The interval 845-882 is disordered; sequence TAAEAPASVPQPQAAVAPQPAPELVGADNGESQPQAWG. The span at 846 to 862 shows a compositional bias: low complexity; the sequence is AAEAPASVPQPQAAVAP. Zn(2+) is bound by residues C890, C892, C901, and H902.

The protein belongs to the SecA family. As to quaternary structure, monomer and homodimer. Part of the essential Sec protein translocation apparatus which comprises SecA, SecYEG and auxiliary proteins SecDF-YajC and YidC. Requires Zn(2+) as cofactor.

The protein localises to the cell inner membrane. It is found in the cytoplasm. The catalysed reaction is ATP + H2O + cellular proteinSide 1 = ADP + phosphate + cellular proteinSide 2.. Functionally, part of the Sec protein translocase complex. Interacts with the SecYEG preprotein conducting channel. Has a central role in coupling the hydrolysis of ATP to the transfer of proteins into and across the cell membrane, serving both as a receptor for the preprotein-SecB complex and as an ATP-driven molecular motor driving the stepwise translocation of polypeptide chains across the membrane. The sequence is that of Protein translocase subunit SecA from Cereibacter sphaeroides (strain ATCC 17025 / ATH 2.4.3) (Rhodobacter sphaeroides).